The sequence spans 376 residues: Polar flagellin A (376 aa).

Coiled-coil stretches lie at residues 103-128 (SNSK…RIAE) and 310-338 (FQNR…IKDT).

The protein belongs to the bacterial flagellin family. Heteromer of multiple flagellin subunits including FlaA, FlaB/D, FlaC, FlaE and FlaF.

The protein localises to the secreted. Its subcellular location is the bacterial flagellum. Flagellin is the subunit protein which polymerizes to form the filaments of bacterial flagella. FlaA is not essential for polar flagellar synthesis and swimming motility. Homomer of FlaA is able to form a functional filament. The sequence is that of Polar flagellin A (flaA) from Vibrio parahaemolyticus serotype O3:K6 (strain RIMD 2210633).